The primary structure comprises 142 residues: Transcriptional regulator MraZ (142 aa).

2 consecutive SpoVT-AbrB domains span residues 5–51 (ASAL…PRPE) and 77–120 (AADV…DAAT).

It belongs to the MraZ family. Forms oligomers.

The protein resides in the cytoplasm. It is found in the nucleoid. In Cupriavidus taiwanensis (strain DSM 17343 / BCRC 17206 / CCUG 44338 / CIP 107171 / LMG 19424 / R1) (Ralstonia taiwanensis (strain LMG 19424)), this protein is Transcriptional regulator MraZ.